A 308-amino-acid polypeptide reads, in one-letter code: Tyrosine recombinase XerD (308 aa).

Residues 3 to 89 (NGFTRLTEQF…SIHEFHRFAL (87 aa)) enclose the Core-binding (CB) domain. The Tyr recombinase domain occupies 110–301 (TLPDVLTVDE…SPETLIETYL (192 aa)). Catalysis depends on residues Arg-153, Lys-177, His-253, Arg-256, and His-279. Tyr-288 functions as the O-(3'-phospho-DNA)-tyrosine intermediate in the catalytic mechanism.

Belongs to the 'phage' integrase family. XerD subfamily. As to quaternary structure, forms a cyclic heterotetrameric complex composed of two molecules of XerC and two molecules of XerD.

It is found in the cytoplasm. In terms of biological role, site-specific tyrosine recombinase, which acts by catalyzing the cutting and rejoining of the recombining DNA molecules. The XerC-XerD complex is essential to convert dimers of the bacterial chromosome into monomers to permit their segregation at cell division. It also contributes to the segregational stability of plasmids. In Bifidobacterium longum (strain NCC 2705), this protein is Tyrosine recombinase XerD.